The chain runs to 132 residues: Movement protein TGB3 (132 aa).

The Cytoplasmic portion of the chain corresponds to 1-11 (MVLVVKVDLSN). A helical membrane pass occupies residues 12–32 (IVLYIVAGCVVVSMLYSPFFS). Residues 33–109 (NDVKASSYAG…TETLFIILSR (77 aa)) are Lumenal-facing. The chain crosses the membrane as a helical span at residues 110-130 (LFGLAVFLFMICLMSIVWFWC). Residues 131 to 132 (HR) are Cytoplasmic-facing.

Belongs to the benyvirus TGB3 movement protein family. As to quaternary structure, interacts with movement proteins TGB1 and TGB2.

It is found in the host cell junction. The protein resides in the host plasmodesma. The protein localises to the host endoplasmic reticulum membrane. Participates in the transport of viral RNA to the plasmodesmata. TGBp3 most probably contains signals of plasmodesmata targeting is therefore involved in the targeting of TGBp2, and viral RNAs-TGBp1 (RNP complex), to plasmodesmata. Can gate plasmodesmata and increase their size exclusion limit. In Beta macrocarpa (Beet), this protein is Movement protein TGB3.